Consider the following 87-residue polypeptide: MVKKSFILVIPQEEKKGSVEFQVSSFTNKIRRLTSHLELHRKDYLSQRGLRRILGKRQRLLAYLSKKNRVRYKELISQLDIREPKTH.

It belongs to the universal ribosomal protein uS15 family. Part of the 30S ribosomal subunit.

Its subcellular location is the plastid. The protein localises to the chloroplast. In Illicium oligandrum (Star anise), this protein is Small ribosomal subunit protein uS15c (rps15).